Here is a 314-residue protein sequence, read N- to C-terminus: Acetaldehyde dehydrogenase 2 (314 aa).

15-18 (SGNI) contributes to the NAD(+) binding site. The active-site Acyl-thioester intermediate is the cysteine 133. Residues 164 to 172 (SAGPGTRQN) and asparagine 289 each bind NAD(+).

This sequence belongs to the acetaldehyde dehydrogenase family.

It catalyses the reaction acetaldehyde + NAD(+) + CoA = acetyl-CoA + NADH + H(+). This chain is Acetaldehyde dehydrogenase 2, found in Nocardioides sp. (strain ATCC BAA-499 / JS614).